A 151-amino-acid polypeptide reads, in one-letter code: Transcriptional regulator MraZ (151 aa).

2 consecutive SpoVT-AbrB domains span residues 5–52 and 81–124; these read IHQV…PLSE and ATDL…SQEE.

The protein belongs to the MraZ family. In terms of assembly, forms oligomers.

The protein resides in the cytoplasm. The protein localises to the nucleoid. The chain is Transcriptional regulator MraZ from Marinomonas sp. (strain MWYL1).